The following is a 232-amino-acid chain: 5'-methylthioadenosine/S-adenosylhomocysteine nucleosidase (232 aa).

Glu12 functions as the Proton acceptor in the catalytic mechanism. Substrate contacts are provided by residues Gly78, Ile152, and 173–174 (ME). The active-site Proton donor is the Asp197.

This sequence belongs to the PNP/UDP phosphorylase family. MtnN subfamily. In terms of assembly, homodimer.

The enzyme catalyses S-adenosyl-L-homocysteine + H2O = S-(5-deoxy-D-ribos-5-yl)-L-homocysteine + adenine. The catalysed reaction is S-methyl-5'-thioadenosine + H2O = 5-(methylsulfanyl)-D-ribose + adenine. It catalyses the reaction 5'-deoxyadenosine + H2O = 5-deoxy-D-ribose + adenine. It functions in the pathway amino-acid biosynthesis; L-methionine biosynthesis via salvage pathway; S-methyl-5-thio-alpha-D-ribose 1-phosphate from S-methyl-5'-thioadenosine (hydrolase route): step 1/2. Catalyzes the irreversible cleavage of the glycosidic bond in both 5'-methylthioadenosine (MTA) and S-adenosylhomocysteine (SAH/AdoHcy) to adenine and the corresponding thioribose, 5'-methylthioribose and S-ribosylhomocysteine, respectively. Also cleaves 5'-deoxyadenosine, a toxic by-product of radical S-adenosylmethionine (SAM) enzymes, into 5-deoxyribose and adenine. Thus, is required for in vivo function of the radical SAM enzymes biotin synthase and lipoic acid synthase, that are inhibited by 5'-deoxyadenosine accumulation. This is 5'-methylthioadenosine/S-adenosylhomocysteine nucleosidase from Salmonella dublin (strain CT_02021853).